We begin with the raw amino-acid sequence, 60 residues long: Large ribosomal subunit protein uL30 (60 aa).

Belongs to the universal ribosomal protein uL30 family. As to quaternary structure, part of the 50S ribosomal subunit.

The chain is Large ribosomal subunit protein uL30 from Flavobacterium johnsoniae (strain ATCC 17061 / DSM 2064 / JCM 8514 / BCRC 14874 / CCUG 350202 / NBRC 14942 / NCIMB 11054 / UW101) (Cytophaga johnsonae).